Here is a 312-residue protein sequence, read N- to C-terminus: Plasma membrane-associated coenzyme Q6 reductase PGA3 (312 aa).

The Extracellular portion of the chain corresponds to 1–15 (MSKEDIEGTNILDEP). A helical membrane pass occupies residues 16–36 (VHGIYIPAALFVVGVAITTYM). The Cytoplasmic segment spans residues 37–39 (SGE). A helical transmembrane segment spans residues 40–60 (LKILWSLPILFMIIFVRAYSA). Residues 61-179 (YKRRRSLYPD…LNYEPNSSKH (119 aa)) lie on the Extracellular side of the membrane. An FAD-binding FR-type domain is found at 70 to 173 (DRWTSLELED…KGPIGTLNYE (104 aa)). FAD is bound by residues 153 to 168 (AGLN…GPIG) and 179 to 211 (HLGI…KVSL). A helical membrane pass occupies residues 180 to 200 (LGIVAGGSGITPVLQILNEII). Residues 201-312 (TVPEDLTKVS…SSGDDQVFVF (112 aa)) are Cytoplasmic-facing.

The protein belongs to the flavoprotein pyridine nucleotide cytochrome reductase family. FAD is required as a cofactor.

It localises to the cell membrane. Its subcellular location is the endoplasmic reticulum membrane. It carries out the reaction 2 Fe(III)-[cytochrome b5] + NADH = 2 Fe(II)-[cytochrome b5] + NAD(+) + H(+). Its activity is regulated as follows. Inhibited by diphenylene iodonium (DPI). Its function is as follows. NADH-dependent cytochrome b5 reductase that reduces coenzyme Q6 at the plasma membrane and mediates lifespan extension by calorie restriction by shifting fermentative to respiratory metabolism, probably through modulating the NAD(+)/NADH ratio. The protein is Plasma membrane-associated coenzyme Q6 reductase PGA3 (PGA3) of Saccharomyces cerevisiae (strain ATCC 204508 / S288c) (Baker's yeast).